The sequence spans 583 residues: Phosphoglucomutase, cytoplasmic 1 (583 aa).

Residues R25 and S124 each coordinate alpha-D-glucose 1,6-bisphosphate. S124 acts as the Phosphoserine intermediate in catalysis. 4 residues coordinate Mg(2+): S124, D300, D302, and D304. A Phosphoserine modification is found at S124. Alpha-D-glucose 1,6-bisphosphate contacts are provided by D304, R305, T368, E387, S389, and K400.

It belongs to the phosphohexose mutase family. Monomer. Requires Mg(2+) as cofactor. Autophosphorylated. Mostly expressed in roots and coleoptiles, and, to a lower extent, in leaves, pollen and developing seeds.

It is found in the cytoplasm. It catalyses the reaction alpha-D-glucose 1-phosphate = alpha-D-glucose 6-phosphate. The catalysed reaction is O-phospho-L-seryl-[protein] + alpha-D-glucose 1-phosphate = alpha-D-glucose 1,6-bisphosphate + L-seryl-[protein]. The enzyme catalyses alpha-D-glucose 1,6-bisphosphate + L-seryl-[protein] = O-phospho-L-seryl-[protein] + alpha-D-glucose 6-phosphate. Catalyzes the reversible isomerization of alpha-D-glucose 1-phosphate to alpha-D-glucose 6-phosphate. The mechanism proceeds via the intermediate compound alpha-D-glucose 1,6-bisphosphate. This enzyme participates in both the breakdown and synthesis of glucose. The protein is Phosphoglucomutase, cytoplasmic 1 of Zea mays (Maize).